The primary structure comprises 87 residues: Phytosulfokines 1 (87 aa).

The N-terminal stretch at 1–24 is a signal peptide; the sequence is MMKTKSEVLIFFFTLVLLLSMASS. The propeptide occupies 25 to 76; sequence VILREDGFAPPKPSPTTHEKASTKGDRDGVECKNSDSEEECLVKKTVAAHTD. The interval 31-59 is disordered; sequence GFAPPKPSPTTHEKASTKGDRDGVECKNS. Positions 41-59 are enriched in basic and acidic residues; sequence THEKASTKGDRDGVECKNS. Sulfotyrosine is present on residues Tyr77 and Tyr79. The propeptide occupies 82–87; the sequence is DLNLSP.

This sequence belongs to the phytosulfokine family. In terms of processing, sulfation is important for activity and for the binding to a putative membrane receptor. PSK-beta is produced from PSK-alpha by exopeptidase digestion. In terms of tissue distribution, expressed only in roots.

The protein resides in the secreted. Promotes plant cell differentiation, organogenesis and somatic embryogenesis as well as cell proliferation. The polypeptide is Phytosulfokines 1 (PSK1) (Arabidopsis thaliana (Mouse-ear cress)).